A 253-amino-acid polypeptide reads, in one-letter code: Endonuclease NucS (253 aa).

It belongs to the NucS endonuclease family.

It is found in the cytoplasm. Functionally, cleaves both 3' and 5' ssDNA extremities of branched DNA structures. This chain is Endonuclease NucS, found in Pyrococcus horikoshii (strain ATCC 700860 / DSM 12428 / JCM 9974 / NBRC 100139 / OT-3).